A 141-amino-acid polypeptide reads, in one-letter code: ATP synthase epsilon chain (141 aa).

It belongs to the ATPase epsilon chain family. In terms of assembly, F-type ATPases have 2 components, CF(1) - the catalytic core - and CF(0) - the membrane proton channel. CF(1) has five subunits: alpha(3), beta(3), gamma(1), delta(1), epsilon(1). CF(0) has three main subunits: a, b and c.

It is found in the cell inner membrane. Functionally, produces ATP from ADP in the presence of a proton gradient across the membrane. The polypeptide is ATP synthase epsilon chain (Cellvibrio japonicus (strain Ueda107) (Pseudomonas fluorescens subsp. cellulosa)).